The chain runs to 211 residues: MIGRLRGMLVEKNSPEILIECAGVGYEVTMPMTSIYALPELEQQATIYTHFVVREDAQLLYGFANKVERKLFRLLIKVNGVGPKLALAILSNMSADQFVSCVRHDDISAIVKIPGVGKKTAERLLIEMRDRLKDWQAQQIHLVSDDGVIPEQLSAELSQETTFVNDNKGDAINALLSLGYKQVQADKAVKSVYNRGMSSENIIRDALKSMI.

The domain I stretch occupies residues 1-64 (MIGRLRGMLV…EDAQLLYGFA (64 aa)). A domain II region spans residues 65–143 (NKVERKLFRL…DWQAQQIHLV (79 aa)). Residues 144 to 162 (SDDGVIPEQLSAELSQETT) are flexible linker. A domain III region spans residues 163 to 211 (FVNDNKGDAINALLSLGYKQVQADKAVKSVYNRGMSSENIIRDALKSMI).

Belongs to the RuvA family. As to quaternary structure, homotetramer. Forms an RuvA(8)-RuvB(12)-Holliday junction (HJ) complex. HJ DNA is sandwiched between 2 RuvA tetramers; dsDNA enters through RuvA and exits via RuvB. An RuvB hexamer assembles on each DNA strand where it exits the tetramer. Each RuvB hexamer is contacted by two RuvA subunits (via domain III) on 2 adjacent RuvB subunits; this complex drives branch migration. In the full resolvosome a probable DNA-RuvA(4)-RuvB(12)-RuvC(2) complex forms which resolves the HJ.

Its subcellular location is the cytoplasm. In terms of biological role, the RuvA-RuvB-RuvC complex processes Holliday junction (HJ) DNA during genetic recombination and DNA repair, while the RuvA-RuvB complex plays an important role in the rescue of blocked DNA replication forks via replication fork reversal (RFR). RuvA specifically binds to HJ cruciform DNA, conferring on it an open structure. The RuvB hexamer acts as an ATP-dependent pump, pulling dsDNA into and through the RuvAB complex. HJ branch migration allows RuvC to scan DNA until it finds its consensus sequence, where it cleaves and resolves the cruciform DNA. In Colwellia psychrerythraea (strain 34H / ATCC BAA-681) (Vibrio psychroerythus), this protein is Holliday junction branch migration complex subunit RuvA.